Here is a 506-residue protein sequence, read N- to C-terminus: Protein MGF 505-9R (506 aa).

The protein belongs to the asfivirus MGF 505 family.

Plays a role in virus cell tropism, and may be required for efficient virus replication in macrophages. The sequence is that of Protein MGF 505-9R from African swine fever virus (isolate Tick/South Africa/Pretoriuskop Pr4/1996) (ASFV).